The following is a 327-amino-acid chain: MLQLDEILANATTAIETAASLVALDEVRVQYLGKKGELTSQLQSLGKLPPEERRTAGQEINKAKGAVQQAIAARKDALQRAELETKLAAETIDVSLPGRRIENGGLHPVTRTVERIEQFFGELGFSTESGPEIEDAFHNFDALNIADDHPARTDHDTFFFNPDLMLRTHTSGVQIRTMEHGKPPFRFIAPGRVYRNDYDQTHTPMFHQVEGMLVDENVNFAQLKGILNEFLCNFFEEEVEVRFRPSFFPFTEPSAEVDVKRKDGKWLEVLGCGMVHPNVLRSVGIDPEKYSGFAFGMGVERLTMLRYGVNDLRSFFENDLRFLKQFK.

Glutamate 252 is a Mg(2+) binding site.

Belongs to the class-II aminoacyl-tRNA synthetase family. Phe-tRNA synthetase alpha subunit type 1 subfamily. Tetramer of two alpha and two beta subunits. The cofactor is Mg(2+).

Its subcellular location is the cytoplasm. It catalyses the reaction tRNA(Phe) + L-phenylalanine + ATP = L-phenylalanyl-tRNA(Phe) + AMP + diphosphate + H(+). The protein is Phenylalanine--tRNA ligase alpha subunit of Photobacterium profundum (strain SS9).